Consider the following 302-residue polypeptide: MPAGLLGIEELGRAEIEAILSRAKDFQPLQSQSLKKLDTLRGKMIVNLFFEASTRTRTSFEIAAKRLGADAISITASGSSVSKGESLVDTLNTLGAMRPDAIVMRHSASGAPHFLARYLPTPIINAGDGTHEHPTQALLDARTILDRCGQLDGLKVAIIGDIAHSRVARSNVHLLSKFGAKIVLCGPASLLPVELAQLAPGVVLTTDIRDAIKDADVIMMLRVQLERQHEASFPASEYFRFYGLQLAHLDLAKPEAIVMHPGPINRGRELSSEVADFQRSVILNQVENGIAVRMAVLEKVIG.

2 residues coordinate carbamoyl phosphate: Arg-55 and Thr-56. An L-aspartate-binding site is contributed by Lys-83. 3 residues coordinate carbamoyl phosphate: Arg-105, His-133, and Gln-136. L-aspartate-binding residues include Arg-166 and Arg-222. Residues Gly-262 and Pro-263 each coordinate carbamoyl phosphate.

Belongs to the aspartate/ornithine carbamoyltransferase superfamily. ATCase family. As to quaternary structure, heterododecamer (2C3:3R2) of six catalytic PyrB chains organized as two trimers (C3), and six regulatory PyrI chains organized as three dimers (R2).

It catalyses the reaction carbamoyl phosphate + L-aspartate = N-carbamoyl-L-aspartate + phosphate + H(+). The protein operates within pyrimidine metabolism; UMP biosynthesis via de novo pathway; (S)-dihydroorotate from bicarbonate: step 2/3. Functionally, catalyzes the condensation of carbamoyl phosphate and aspartate to form carbamoyl aspartate and inorganic phosphate, the committed step in the de novo pyrimidine nucleotide biosynthesis pathway. The sequence is that of Aspartate carbamoyltransferase catalytic subunit from Solibacter usitatus (strain Ellin6076).